A 333-amino-acid polypeptide reads, in one-letter code: DNA-directed RNA polymerase subunit alpha (333 aa).

The segment at 1 to 234 is alpha N-terminal domain (alpha-NTD); it reads MQISVNEFLT…QQLAAFVDLK (234 aa). Residues 248–333 form an alpha C-terminal domain (alpha-CTD) region; the sequence is IDPILLRPVD…SLKKDDKATA (86 aa).

It belongs to the RNA polymerase alpha chain family. In terms of assembly, homodimer. The RNAP catalytic core consists of 2 alpha, 1 beta, 1 beta' and 1 omega subunit. When a sigma factor is associated with the core the holoenzyme is formed, which can initiate transcription.

The catalysed reaction is RNA(n) + a ribonucleoside 5'-triphosphate = RNA(n+1) + diphosphate. Functionally, DNA-dependent RNA polymerase catalyzes the transcription of DNA into RNA using the four ribonucleoside triphosphates as substrates. The protein is DNA-directed RNA polymerase subunit alpha of Pseudomonas fluorescens (strain ATCC BAA-477 / NRRL B-23932 / Pf-5).